Reading from the N-terminus, the 430-residue chain is Adenylosuccinate synthetase (430 aa).

Residues G12–K18 and G40–T42 contribute to the GTP site. D13 (proton acceptor) is an active-site residue. Mg(2+) contacts are provided by D13 and G40. IMP contacts are provided by residues D13 to K16, N38 to H41, T130, R144, Q224, T239, and R303. H41 (proton donor) is an active-site residue. Residue V299–R305 coordinates substrate. GTP-binding positions include R305, K331–D333, and S413–S415.

It belongs to the adenylosuccinate synthetase family. As to quaternary structure, homodimer. The cofactor is Mg(2+).

It localises to the cytoplasm. The catalysed reaction is IMP + L-aspartate + GTP = N(6)-(1,2-dicarboxyethyl)-AMP + GDP + phosphate + 2 H(+). It participates in purine metabolism; AMP biosynthesis via de novo pathway; AMP from IMP: step 1/2. Plays an important role in the de novo pathway of purine nucleotide biosynthesis. Catalyzes the first committed step in the biosynthesis of AMP from IMP. This is Adenylosuccinate synthetase from Methylobacterium nodulans (strain LMG 21967 / CNCM I-2342 / ORS 2060).